Here is a 127-residue protein sequence, read N- to C-terminus: Cyclin-dependent kinase 2-associated protein 2 (127 aa).

Residues 1–47 are disordered; it reads MSYKPIAPAPSSTPGSSTPGPGTPVPTAGSVPSPSGSVPGAAAPFRP. Residues 9 to 44 show a composition bias toward low complexity; the sequence is APSSTPGSSTPGPGTPVPTAGSVPSPSGSVPGAAAP. Positions 65–107 are interaction with CDK2; sequence PPGSQGSQSTYTDLLSVIEEMGKEIRPTYAGSKSAMERLKRGI.

The protein belongs to the CDK2AP family. In terms of assembly, component of the nucleosome remodeling and deacetylase (NuRD) repressor complex, composed of core proteins MTA1, MTA2, MTA3, RBBP4, RBBP7, HDAC1, HDAC2, MBD2, MBD3, and peripherally associated proteins CDK2AP1, CDK2AP2, GATAD2A, GATAD2B, CHD3, CHD4 and CHD5. The exact stoichiometry of the NuRD complex is unknown, and some subunits such as MBD2 and MBD3, GATAD2A and GATAD2B, and CHD3, CHD4 and CHD5 define mutually exclusive NuRD complexes. Interacts with CDK2AP1. Interacts with CDK2. Interacts with MAPK1. Post-translationally, phosphorylated by MAPK1 and CDK2. Oocytes (at protein level).

The protein resides in the cytoplasm. The protein localises to the nucleus. Functionally, acts as a component of the histone deacetylase NuRD complex which participates in the remodeling of chromatin. Inhibits cell cycle G1/S phase transition by repressing CDK2 expression and activation; represses CDK2 activation by inhibiting its interaction with cyclin E and A. Plays a role in regulating the self-renewal of embryonic stem cells (ESCs) and in maintaining cell survival during terminal differentiation of ESCs. Regulates microtubule organization of metaphase II oocytes. The polypeptide is Cyclin-dependent kinase 2-associated protein 2 (Cdk2ap2) (Mus musculus (Mouse)).